The primary structure comprises 252 residues: MTQLKELPLTTLQFYATAPYACSYLPNKTARSQVATPSHLIHADVYGDLLNAGFRRSGLYTYRPYCDECKACIATRILVNQFIPSRSQRRAQKKHAGLEVFVLNLGYQEEHYQLYQRYQHERHAGGDMDSDDQDQYMQFLLQSRVNSRIVEFRDGPHDPHPGRLRMVSMIDILEEGISSVYTFYDTSSHAASYGSYNILWQLEQARTLSLPYLYLGYYIKESDKMSYKIKYQPMEGLIDDHWQKLLGHNIYP.

It belongs to the R-transferase family. Bpt subfamily.

Its subcellular location is the cytoplasm. The catalysed reaction is N-terminal L-glutamyl-[protein] + L-leucyl-tRNA(Leu) = N-terminal L-leucyl-L-glutamyl-[protein] + tRNA(Leu) + H(+). It catalyses the reaction N-terminal L-aspartyl-[protein] + L-leucyl-tRNA(Leu) = N-terminal L-leucyl-L-aspartyl-[protein] + tRNA(Leu) + H(+). Functionally, functions in the N-end rule pathway of protein degradation where it conjugates Leu from its aminoacyl-tRNA to the N-termini of proteins containing an N-terminal aspartate or glutamate. The chain is Aspartate/glutamate leucyltransferase from Polynucleobacter necessarius subsp. necessarius (strain STIR1).